Here is a 474-residue protein sequence, read N- to C-terminus: tRNA modification GTPase MnmE (474 aa).

R25, E82, and K123 together coordinate (6S)-5-formyl-5,6,7,8-tetrahydrofolate. In terms of domain architecture, TrmE-type G spans 219 to 386 (GIKVVIAGKP…LKKHLYDSAM (168 aa)). N229 contributes to the K(+) binding site. GTP contacts are provided by residues 229–234 (NAGKSS), 248–254 (SNISGTT), and 273–276 (DTAG). S233 is a Mg(2+) binding site. Residues S248, I250, and T253 each contribute to the K(+) site. T254 lines the Mg(2+) pocket. K474 serves as a coordination point for (6S)-5-formyl-5,6,7,8-tetrahydrofolate.

This sequence belongs to the TRAFAC class TrmE-Era-EngA-EngB-Septin-like GTPase superfamily. TrmE GTPase family. In terms of assembly, homodimer. Heterotetramer of two MnmE and two MnmG subunits. K(+) is required as a cofactor.

The protein localises to the cytoplasm. In terms of biological role, exhibits a very high intrinsic GTPase hydrolysis rate. Involved in the addition of a carboxymethylaminomethyl (cmnm) group at the wobble position (U34) of certain tRNAs, forming tRNA-cmnm(5)s(2)U34. This is tRNA modification GTPase MnmE from Blochmanniella floridana.